Here is a 356-residue protein sequence, read N- to C-terminus: DNA polymerase IV (356 aa).

The UmuC domain maps to 6 to 187 (IIHIDMDYFF…LDIGDFPGVG (182 aa)). Positions 10 and 105 each coordinate Mg(2+). Glutamate 106 is an active-site residue.

The protein belongs to the DNA polymerase type-Y family. As to quaternary structure, monomer. It depends on Mg(2+) as a cofactor.

Its subcellular location is the cytoplasm. The catalysed reaction is DNA(n) + a 2'-deoxyribonucleoside 5'-triphosphate = DNA(n+1) + diphosphate. In terms of biological role, poorly processive, error-prone DNA polymerase involved in untargeted mutagenesis. Copies undamaged DNA at stalled replication forks, which arise in vivo from mismatched or misaligned primer ends. These misaligned primers can be extended by PolIV. Exhibits no 3'-5' exonuclease (proofreading) activity. May be involved in translesional synthesis, in conjunction with the beta clamp from PolIII. This Staphylococcus aureus (strain JH1) protein is DNA polymerase IV.